Reading from the N-terminus, the 196-residue chain is Corticoliberin (196 aa).

The N-terminal stretch at Met1–Ala24 is a signal peptide. A propeptide spanning residues Leu25–Arg153 is cleaved from the precursor. Disordered regions lie at residues Pro32 to Ala61, Ala85 to Glu105, and Gly136 to Pro158. Low complexity-rich tracts occupy residues Pro38–Phe47 and Ala85–Pro104. A compositionally biased stretch (basic and acidic residues) spans Glu146–Glu156. Ile194 carries the isoleucine amide modification.

The protein belongs to the sauvagine/corticotropin-releasing factor/urotensin I family. In terms of assembly, interacts (via C-terminus) with CRFR1 (via N-terminal extracellular domain). Produced by the hypothalamus and placenta.

The protein localises to the secreted. Hormone regulating the release of corticotropin from pituitary gland. Induces NLRP6 in intestinal epithelial cells, hence may influence gut microbiota profile. The polypeptide is Corticoliberin (CRH) (Homo sapiens (Human)).